Here is a 450-residue protein sequence, read N- to C-terminus: MSAIQAAWPSGTECIAKYNFHGTAEQDLPFCKGDVLTIVAVTKDPNWYKAKNKVGREGIIPANYVQKREGVKAGTKLSLMPWFHGKITREQAERLLYPPETGLFLVRESTNYPGDYTLCVSCDGKVEHYRIMYHASKLSIDEEVYFENLMQLVEHYTSDADGLCTRLIKPKVMEGTVAAQDEFYRSGWALNMKELKLLQTIGKGEFGDVMLGDYRGNKVAVKCIKNDATAQAFLAEASVMTQLRHSNLVQLLGVIVEEKGGLYIVTEYMAKGSLVDYLRSRGRSVLGGDCLLKFSLDVCEAMEYLEGNNFVHRDLAARNVLVSEDNVAKVSDFGLTKEASSTQDTGKLPVKWTAPEALREKKFSTKSDVWSFGILLWEIYSFGRVPYPRIPLKDVVPRVEKGYKMDAPDGCPPAVYEVMKNCWHLDAAMRPSFLQLREQLEHIKTHELHL.

At S2 the chain carries N-acetylserine. The SH3 domain maps to 9–70; that stretch reads PSGTECIAKY…PANYVQKREG (62 aa). Positions 9-70 are interaction with PTPN22; it reads PSGTECIAKY…PANYVQKREG (62 aa). The region spanning 82–171 is the SH2 domain; it reads WFHGKITREQ…GLCTRLIKPK (90 aa). Phosphotyrosine is present on Y184. Residues 195-449 enclose the Protein kinase domain; it reads LKLLQTIGKG…LEHIKTHELH (255 aa). Residues 201–209 and K222 each bind ATP; that span reads IGKGEFGDV. Y304 is subject to Phosphotyrosine. D314 (proton acceptor) is an active-site residue. S364 carries the phosphoserine; by PKA modification. Y416 is subject to Phosphotyrosine; by autocatalysis.

It belongs to the protein kinase superfamily. Tyr protein kinase family. CSK subfamily. In terms of assembly, homodimer (via SH3-domain). Interacts with PTPN22. Interacts with phosphorylated SIT1, PAG1, LIME1 and TGFB1I1; these interactions serve to recruit CSK to the membrane where it can phosphorylate and inhibit Src-family kinases. Interacts with SRCIN1. Interacts with RHOH. Interacts (via SH2 domain) with SCIMP; this interaction is dependent on phosphorylation of SCIMP 'Tyr-107'. Interacts (via SH2 domain) with PRAG1 (when phosphorylated at 'Tyr-391'); this interaction prevents translocation of CSK from the cytoplasm to the membrane leading to increased activity of CSK. Interacts with LRRK1. The cofactor is Mg(2+). Requires Mn(2+) as cofactor. In terms of processing, phosphorylated at Ser-364 by PKA, leading to increased activity. Autophosphorylated. Expressed in lung and macrophages.

It is found in the cytoplasm. It localises to the cell membrane. The catalysed reaction is L-tyrosyl-[protein] + ATP = O-phospho-L-tyrosyl-[protein] + ADP + H(+). Non-receptor tyrosine-protein kinase that plays an important role in the regulation of cell growth, differentiation, migration and immune response. Phosphorylates tyrosine residues located in the C-terminal tails of Src-family kinases (SFKs) including LCK, SRC, HCK, FYN, LYN, CSK or YES1. Upon tail phosphorylation, Src-family members engage in intramolecular interactions between the phosphotyrosine tail and the SH2 domain that result in an inactive conformation. To inhibit SFKs, CSK is recruited to the plasma membrane via binding to transmembrane proteins or adapter proteins located near the plasma membrane. Suppresses signaling by various surface receptors, including T-cell receptor (TCR) and B-cell receptor (BCR) by phosphorylating and maintaining inactive several positive effectors such as FYN or LCK. The chain is Tyrosine-protein kinase CSK (CSK) from Homo sapiens (Human).